The primary structure comprises 340 residues: UDP-N-acetylenolpyruvoylglucosamine reductase (340 aa).

The FAD-binding PCMH-type domain maps to I11–K181. R156 is an active-site residue. The active-site Proton donor is the S227. E323 is an active-site residue.

The protein belongs to the MurB family. FAD is required as a cofactor.

Its subcellular location is the cytoplasm. It catalyses the reaction UDP-N-acetyl-alpha-D-muramate + NADP(+) = UDP-N-acetyl-3-O-(1-carboxyvinyl)-alpha-D-glucosamine + NADPH + H(+). The protein operates within cell wall biogenesis; peptidoglycan biosynthesis. Cell wall formation. The polypeptide is UDP-N-acetylenolpyruvoylglucosamine reductase (Wigglesworthia glossinidia brevipalpis).